We begin with the raw amino-acid sequence, 455 residues long: Hexokinase-2 (455 aa).

In terms of domain architecture, Hexokinase spans 3–445; the sequence is ANFQQAVKKL…SGIGAALCAL (443 aa). The hexokinase small subdomain stretch occupies residues 57–195; that stretch reads TGAETGDFLA…NLPIRIEAVI (139 aa). Residue 68 to 73 coordinates ATP; that stretch reads DFGGTN. Residues 144–145, 161–162, and 196–197 each bind substrate; these read SY, TK, and ND. Residues 196-434 are hexokinase large subdomain; sequence NDTVGTLVTR…KLISIGIAKD (239 aa). T222 lines the ATP pocket. Residues N225, E252, and E283 each contribute to the substrate site. ATP contacts are provided by residues 288–289, 325–329, and 400–404; these read GM, TSVLS, and SLVEH.

This sequence belongs to the hexokinase family. Monomer.

It carries out the reaction a D-hexose + ATP = a D-hexose 6-phosphate + ADP + H(+). It catalyses the reaction D-mannose + ATP = D-mannose 6-phosphate + ADP + H(+). The catalysed reaction is D-fructose + ATP = D-fructose 6-phosphate + ADP + H(+). The enzyme catalyses D-glucose + ATP = D-glucose 6-phosphate + ADP + H(+). It functions in the pathway carbohydrate metabolism; hexose metabolism. It participates in carbohydrate degradation; glycolysis; D-glyceraldehyde 3-phosphate and glycerone phosphate from D-glucose: step 1/4. Its function is as follows. Catalyzes the phosphorylation of hexose (six-carbon sugars) to hexose 6-phosphate. Phosphorylates D-glucose, D-fructose and D-mannose. Compared to hxk1, has a much higher affinity for D-glucose. Constitutes the initial enzyme of glycolysis by catalyzing the phosphorylation of glucose to D-glucose 6-phosphate. This is Hexokinase-2 from Schizosaccharomyces pombe (strain 972 / ATCC 24843) (Fission yeast).